The sequence spans 202 residues: Imidazoleglycerol-phosphate dehydratase (202 aa).

The protein belongs to the imidazoleglycerol-phosphate dehydratase family.

The protein localises to the cytoplasm. The enzyme catalyses D-erythro-1-(imidazol-4-yl)glycerol 3-phosphate = 3-(imidazol-4-yl)-2-oxopropyl phosphate + H2O. Its pathway is amino-acid biosynthesis; L-histidine biosynthesis; L-histidine from 5-phospho-alpha-D-ribose 1-diphosphate: step 6/9. This chain is Imidazoleglycerol-phosphate dehydratase, found in Rhizobium johnstonii (strain DSM 114642 / LMG 32736 / 3841) (Rhizobium leguminosarum bv. viciae).